The chain runs to 280 residues: Rhomboid-like protein 11, chloroplastic (280 aa).

The transit peptide at 1–57 (MSQLLHLHRLSLPQSSLRFRFPPLHRRRAASSPTNSTQPPLQFRPLTVSRSQITCRF) directs the protein to the chloroplast. Topologically, residues 58–82 (SQSDITPQFELDKAKDNRKPQKRAN) are stromal. Residues 83 to 103 (GIFWIILINLGIYLADHFFQV) form a helical membrane-spanning segment. Residues 104 to 117 (RGIKSLYLYHNFPA) lie on the Chloroplast intermembrane side of the membrane. A helical membrane pass occupies residues 118–140 (WYQFVTATFCHANWNHLSSNLFF). Over 141 to 154 (LYIFGKLVEEEEGN) the chain is Stromal. A helical transmembrane segment spans residues 155 to 175 (FGLWLSYLFTGVGANLVSWLV). At 176–178 (LPR) the chain is on the chloroplast intermembrane side. The helical transmembrane segment at 179–199 (NAVSVGASGAVFGLFAISVLV) threads the bilayer. Catalysis depends on Ser186, which acts as the Nucleophile. The Stromal segment spans residues 200–243 (KMSWDWRKILEVLILGQFVIERVMEAAQASAGLSGTIYGGYSLQ). Residues 244 to 264 (TVNHIAHLSGALVGVVLVWLL) form a helical membrane-spanning segment. His250 serves as the catalytic Charge relay system. Over 265–280 (SKFPSASMDQDVKKSS) the chain is Chloroplast intermembrane.

The protein belongs to the peptidase S54 family. In terms of assembly, homooligomer.

The protein resides in the plastid. The protein localises to the chloroplast inner membrane. Rhomboid-type serine protease that catalyzes intramembrane proteolysis. May be involved in TIC22 processing during its import. The protein is Rhomboid-like protein 11, chloroplastic of Arabidopsis thaliana (Mouse-ear cress).